A 265-amino-acid polypeptide reads, in one-letter code: DNA repair protein RecO (265 aa).

It belongs to the RecO family.

Functionally, involved in DNA repair and RecF pathway recombination. The sequence is that of DNA repair protein RecO from Mycobacterium marinum (strain ATCC BAA-535 / M).